The sequence spans 406 residues: Argininosuccinate synthase (406 aa).

ATP contacts are provided by residues 10–18 (AYSGGLDTS) and alanine 37. Tyrosine 88 and serine 93 together coordinate L-citrulline. An ATP-binding site is contributed by glycine 118. Residues threonine 120, asparagine 124, and aspartate 125 each contribute to the L-aspartate site. L-citrulline is bound at residue asparagine 124. The L-citrulline site is built by arginine 128, serine 180, serine 189, glutamate 265, and tyrosine 277.

It belongs to the argininosuccinate synthase family. Type 1 subfamily. As to quaternary structure, homotetramer.

Its subcellular location is the cytoplasm. The catalysed reaction is L-citrulline + L-aspartate + ATP = 2-(N(omega)-L-arginino)succinate + AMP + diphosphate + H(+). Its pathway is amino-acid biosynthesis; L-arginine biosynthesis; L-arginine from L-ornithine and carbamoyl phosphate: step 2/3. This Methylobacillus flagellatus (strain ATCC 51484 / DSM 6875 / VKM B-1610 / KT) protein is Argininosuccinate synthase.